A 348-amino-acid polypeptide reads, in one-letter code: MKNTFNTSNVFASAYSFWGSFIGFILSTSNRLYIGWFGILMFPLLVLATVAYIAAFIFAPPVDIDGIREPVAGALLYGNNIISGAVIPSSNAIGVHFYPVWEALGFDEWLYNGGTYQFVVLHFIFGAGAYMGREWEFSFRLGMRPWIFVAFSAPLVAASAVFIVYPIGQGSFSDGMPLGISGTFNFMLVFQAEHNILMHPFHILGVAAVFGGSLFSAMHGSLVTSSLLAETAGDLSLNIGYNFGQEDETYSISAAHGYFGRLIFQYASFNNSRSLHFFLAAWPVIGIWFTSLGVSTMAFNLNGLNFNQSIIDSSGHLINSWADIVNRADLGMEVMHERNAHNFPLDLA.

Transmembrane regions (helical) follow at residues 33–50, 122–137, and 146–160; these read YIGW…LATV, HFIF…EWEF, and WIFV…AASA. Histidine 122 serves as a coordination point for chlorophyll a. Pheophytin a is bound at residue tyrosine 130. Positions 174 and 193 each coordinate [CaMn4O5] cluster. Residues 201–222 traverse the membrane as a helical segment; that stretch reads FHILGVAAVFGGSLFSAMHGSL. Residue histidine 202 coordinates chlorophyll a. Residues histidine 219 and 268–269 each bind a quinone; that span reads SF. A Fe cation-binding site is contributed by histidine 219. Histidine 276 is a Fe cation binding site. Residues 278–292 form a helical membrane-spanning segment; sequence FLAAWPVIGIWFTSL. Positions 336, 337, 346, and 348 each coordinate [CaMn4O5] cluster.

It belongs to the reaction center PufL/M/PsbA/D family. As to quaternary structure, PSII is composed of 1 copy each of membrane proteins PsbA, PsbB, PsbC, PsbD, PsbE, PsbF, PsbH, PsbI, PsbJ, PsbK, PsbL, PsbM, PsbT, PsbX, PsbY, PsbZ, Psb30/Ycf12, at least 3 peripheral proteins of the oxygen-evolving complex and a large number of cofactors. It forms dimeric complexes. The D1/D2 heterodimer binds P680, chlorophylls that are the primary electron donor of PSII, and subsequent electron acceptors. It shares a non-heme iron and each subunit binds pheophytin, quinone, additional chlorophylls, carotenoids and lipids. D1 provides most of the ligands for the Mn4-Ca-O5 cluster of the oxygen-evolving complex (OEC). There is also a Cl(-1) ion associated with D1 and D2, which is required for oxygen evolution. The PSII complex binds additional chlorophylls, carotenoids and specific lipids. is required as a cofactor. In terms of processing, tyr-165 forms a radical intermediate that is referred to as redox-active TyrZ, YZ or Y-Z.

The protein resides in the plastid. Its subcellular location is the chloroplast thylakoid membrane. The catalysed reaction is 2 a plastoquinone + 4 hnu + 2 H2O = 2 a plastoquinol + O2. Photosystem II (PSII) is a light-driven water:plastoquinone oxidoreductase that uses light energy to abstract electrons from H(2)O, generating O(2) and a proton gradient subsequently used for ATP formation. It consists of a core antenna complex that captures photons, and an electron transfer chain that converts photonic excitation into a charge separation. The D1/D2 (PsbA/PsbD) reaction center heterodimer binds P680, the primary electron donor of PSII as well as several subsequent electron acceptors. The sequence is that of Photosystem II protein D1 from Heterocapsa triquetra (Dinoflagellate).